Reading from the N-terminus, the 341-residue chain is Phenylalanine--tRNA ligase alpha subunit (341 aa).

Glu256 is a binding site for Mg(2+).

It belongs to the class-II aminoacyl-tRNA synthetase family. Phe-tRNA synthetase alpha subunit type 1 subfamily. Tetramer of two alpha and two beta subunits. Mg(2+) is required as a cofactor.

The protein resides in the cytoplasm. It catalyses the reaction tRNA(Phe) + L-phenylalanine + ATP = L-phenylalanyl-tRNA(Phe) + AMP + diphosphate + H(+). In Chlamydia caviae (strain ATCC VR-813 / DSM 19441 / 03DC25 / GPIC) (Chlamydophila caviae), this protein is Phenylalanine--tRNA ligase alpha subunit.